The primary structure comprises 243 residues: Pyridoxine 5'-phosphate synthase (243 aa).

Asn9 serves as a coordination point for 3-amino-2-oxopropyl phosphate. 1-deoxy-D-xylulose 5-phosphate is bound at residue 11-12 (DH). Arg20 lines the 3-amino-2-oxopropyl phosphate pocket. The active-site Proton acceptor is the His45. The 1-deoxy-D-xylulose 5-phosphate site is built by Arg47 and His52. The Proton acceptor role is filled by Glu72. A 1-deoxy-D-xylulose 5-phosphate-binding site is contributed by Thr102. Catalysis depends on His193, which acts as the Proton donor. 3-amino-2-oxopropyl phosphate contacts are provided by residues Gly194 and 215–216 (GH).

This sequence belongs to the PNP synthase family. In terms of assembly, homooctamer; tetramer of dimers.

It localises to the cytoplasm. It carries out the reaction 3-amino-2-oxopropyl phosphate + 1-deoxy-D-xylulose 5-phosphate = pyridoxine 5'-phosphate + phosphate + 2 H2O + H(+). It participates in cofactor biosynthesis; pyridoxine 5'-phosphate biosynthesis; pyridoxine 5'-phosphate from D-erythrose 4-phosphate: step 5/5. Functionally, catalyzes the complicated ring closure reaction between the two acyclic compounds 1-deoxy-D-xylulose-5-phosphate (DXP) and 3-amino-2-oxopropyl phosphate (1-amino-acetone-3-phosphate or AAP) to form pyridoxine 5'-phosphate (PNP) and inorganic phosphate. This is Pyridoxine 5'-phosphate synthase from Salmonella typhi.